A 94-amino-acid chain; its full sequence is Protein S100-A1 (94 aa).

2 EF-hand domains span residues 13–48 and 50–85; these read INVF…FLDV and KDAD…LTVA. Lys28, Glu33, Asp63, Asn65, Asp67, Glu69, and Glu74 together coordinate Ca(2+). Cys86 is modified (S-nitrosocysteine).

The protein belongs to the S-100 family. In terms of assembly, dimer of either two alpha chains, or two beta chains, or one alpha and one beta chain. Also forms heterodimers with S100P. Interacts with AGER. Interacts with CAPZA1. Interacts with FKBP4. Interacts with RYR1 and RYR2. Interacts with CACYBP in a calcium-dependent manner. Interacts with PPP5C (via TPR repeats); the interaction is calcium-dependent and modulates PPP5C activity. Interacts with ATP2A2 and PLN in a Ca(2+)-dependent manner. Interacts with mitochondrial F1-ATPase subunits ATP5F1A and ATP5F1B; these interactions increase F1-ATPase activity. Glutathionylated; glutathionylation increases affinity to calcium about 10-fold. Although predominant among the water-soluble brain proteins, S100 is also found in a variety of other tissues.

Its subcellular location is the cytoplasm. The protein resides in the sarcoplasmic reticulum. The protein localises to the mitochondrion. Its function is as follows. Small calcium binding protein that plays important roles in several biological processes such as Ca(2+) homeostasis, chondrocyte biology and cardiomyocyte regulation. In response to an increase in intracellular Ca(2+) levels, binds calcium which triggers conformational changes. These changes allow interactions with specific target proteins and modulate their activity. Regulates a network in cardiomyocytes controlling sarcoplasmic reticulum Ca(2+) cycling and mitochondrial function through interaction with the ryanodine receptors RYR1 and RYR2, sarcoplasmic reticulum Ca(2+)-ATPase/ATP2A2 and mitochondrial F1-ATPase. Facilitates diastolic Ca(2+) dissociation and myofilament mechanics in order to improve relaxation during diastole. The protein is Protein S100-A1 (S100a1) of Rattus norvegicus (Rat).